The sequence spans 35 residues: GCIAKNKECAWFSGEWCCGALSCKYSIKRNLKICV.

3 cysteine pairs are disulfide-bonded: cysteine 2–cysteine 18, cysteine 9–cysteine 23, and cysteine 17–cysteine 34.

It belongs to the neurotoxin 07 (Beta/delta-agtx) family. Expressed by the venom gland.

It is found in the secreted. Functionally, gating-modifier toxin that inhibits mammalian and insect voltage-gated sodium channels. It shifts the voltage dependence of channel activation to more positive voltages. It shows potent activity on Nav1.4/SCN4A (IC(50)=103 nM), Nav1.5/SCN5A (IC(50)=268 nM) and Para/DmNav1 (IC(50)=555 nM) and lower activities on Nav1.2/SCN2A (IC(50)=1447 nM) and Nav1.6/SCN8A (IC(50)=3504 nM). In addition, at a concentration of 1 uM, the toxin inhibits 90-100% of sodium current through Nav1.2/SCN2A, Nav1.4/SCN4A, Nav1.5/SCN5A, Nav1.6/SCN8A and Para/DmNav1 channels, when the voltage of maximal activation of the channel in control conditions is applied. It binds to the S3-S4 helix-loop-helix motif in the voltage-sensing domain of repeat 1 (shown on hNav1.4/SCN4A). The toxin is amphiphilic and binds to both neutral and negatively charged lipid vesicles with high affinity. The hydrophobic face lies on the opposite side to the hydrophobic faces of classical gating modifiers. The sequence is that of Mu-thomitoxin-Hme1c from Heriaeus mellotteei (Crab spider).